A 173-amino-acid chain; its full sequence is Putative metal-dependent hydrolase BCG9842_B2589 (173 aa).

The Zn(2+) site is built by H65, H156, and H160.

This sequence belongs to the metal hydrolase YfiT family. As to quaternary structure, homodimer. It depends on Zn(2+) as a cofactor.

Its subcellular location is the cytoplasm. Possible metal-dependent hydrolase. This chain is Putative metal-dependent hydrolase BCG9842_B2589, found in Bacillus cereus (strain G9842).